Consider the following 307-residue polypeptide: CRISPR-associated endonuclease Cas1 2 (307 aa).

Glutamate 142, histidine 206, and glutamate 221 together coordinate Mn(2+).

It belongs to the CRISPR-associated endonuclease Cas1 family. In terms of assembly, homodimer, forms a heterotetramer with a Cas2 homodimer. Forms oligomers, probably binds nucleic acids as a homodimer. Mg(2+) serves as cofactor. It depends on Mn(2+) as a cofactor.

CRISPR (clustered regularly interspaced short palindromic repeat), is an adaptive immune system that provides protection against mobile genetic elements (viruses, transposable elements and conjugative plasmids). CRISPR clusters contain spacers, sequences complementary to antecedent mobile elements, and target invading nucleic acids. CRISPR clusters are transcribed and processed into CRISPR RNA (crRNA). Acts as a dsDNA endonuclease. Involved in the integration of spacer DNA into the CRISPR cassette. Its function is as follows. In vitro catalyzes a concerted transesterification reaction on branched DNA, as would be expected during integration of protospacers into the CRISPR leader sequence; Cas2 is not required in vitro. This reaction requires a 3'-OH group at the branch point. Binds ss- and dsDNA and ss- and dsRNA with approximately equal affinity. May be able to anneal complementary DNA strands. This Saccharolobus solfataricus (strain ATCC 35092 / DSM 1617 / JCM 11322 / P2) (Sulfolobus solfataricus) protein is CRISPR-associated endonuclease Cas1 2.